The following is a 253-amino-acid chain: Probable U2 small nuclear ribonucleoprotein A' (253 aa).

4 LRR repeats span residues 20 to 41, 43 to 64, 65 to 86, and 89 to 110; these read NMRE…GVTR, QFDV…PTFS, RLNT…IATK, and NLKT…EPLA. In terms of domain architecture, LRRCT spans 123-161; the sequence is NPITHKDNYRMYMIYKLPTVRVIDFNRVRLTEREAAKKM. Disordered regions lie at residues 163 to 205 and 232 to 253; these read KGKS…EDRE and VPEK…AMES. Residues 169-182 show a composition bias toward basic and acidic residues; the sequence is KARDAIQKSVHTED.

Belongs to the U2 small nuclear ribonucleoprotein A family. Interacts with rnp-3.

Its subcellular location is the nucleus. In terms of biological role, this protein is associated with sn-RNP U2. It helps the A' protein to bind stem loop IV of U2 snRNA. Required maternally for early embryonic development and zygotically for germline and somatic development. Has a role in the switch from mitosis to meiosis. Might function in alternative splicing. This is Probable U2 small nuclear ribonucleoprotein A' (mog-2) from Caenorhabditis elegans.